Consider the following 290-residue polypeptide: L-proline cis-3-hydroxylase 1 (290 aa).

The Fe cation site is built by H107, D109, and H158. R168 contributes to the 2-oxoglutarate binding site.

This sequence belongs to the L-proline cis-4-/cis-3-hydroxylase family. In terms of assembly, homodimer. The cofactor is Fe(2+).

It catalyses the reaction L-proline + 2-oxoglutarate + O2 = cis-3-hydroxy-L-proline + succinate + CO2. With respect to regulation, inhibited by metal ions such as Co(2+), Zn(2+), Ni(2+) or Cu(2+). Is also inhibited by EDTA in vitro. Unlike the procollagen-proline cis-3- and trans-4-hydroxylases from mammals, does not necessarily require L-ascorbate for activity although it does increase the activity of the enzyme. Functionally, dioxygenase that catalyzes the 2-oxoglutarate-dependent selective hydroxylation of free L-proline to cis-3-hydroxy-L-proline (cis-3-Hyp). D-proline, trans-4-hydroxy-L-proline, cis-4-hydroxy-L-proline, cis-4-hydroxy-D-proline, and 3,4-dehydro-DL-proline are not substrates. The sequence is that of L-proline cis-3-hydroxylase 1 from Streptomyces sp.